A 64-amino-acid chain; its full sequence is Ferredoxin-2 (64 aa).

The 4Fe-4S ferredoxin-type domain maps to 2-29; sequence RIHVDQDKCCGAGSCVLAAPDVFDQREE. 3 residues coordinate [3Fe-4S] cluster: Cys-10, Cys-16, and Cys-55.

Requires [3Fe-4S] cluster as cofactor.

Electron transport protein for the cytochrome P-450-SU2 system. The polypeptide is Ferredoxin-2 (subB) (Streptomyces griseolus).